The primary structure comprises 140 residues: MAIERTFSMIKPDATKRNLTGAITKMLEDAGLRVVASKRVWMSRREAEGFYAVHKDRPFFGELVEFMSSGPTVVQVLEGENAIAKNREVMGATNPANAAEGTIRKVHALSIGENSVHGSDAPETAAEEIAYWFSGTEIVG.

ATP-binding residues include Lys-11, Phe-59, Arg-87, Thr-93, Arg-104, and Asn-114. The Pros-phosphohistidine intermediate role is filled by His-117.

Belongs to the NDK family. Homotetramer. Mg(2+) is required as a cofactor.

The protein localises to the cytoplasm. The enzyme catalyses a 2'-deoxyribonucleoside 5'-diphosphate + ATP = a 2'-deoxyribonucleoside 5'-triphosphate + ADP. It carries out the reaction a ribonucleoside 5'-diphosphate + ATP = a ribonucleoside 5'-triphosphate + ADP. Functionally, major role in the synthesis of nucleoside triphosphates other than ATP. The ATP gamma phosphate is transferred to the NDP beta phosphate via a ping-pong mechanism, using a phosphorylated active-site intermediate. The protein is Nucleoside diphosphate kinase of Sinorhizobium medicae (strain WSM419) (Ensifer medicae).